The following is a 293-amino-acid chain: MKI67 FHA domain-interacting nucleolar phosphoprotein (293 aa).

An N-acetylalanine modification is found at Ala2. Lys38 participates in a covalent cross-link: Glycyl lysine isopeptide (Lys-Gly) (interchain with G-Cter in SUMO2). The region spanning 45–123 is the RRM domain; it reads GVVYVRHLPN…RLLECHFMPP (79 aa). Arg114 is modified (omega-N-methylarginine; by PRMT1 and PRMT8). Lys139 participates in a covalent cross-link: Glycyl lysine isopeptide (Lys-Gly) (interchain with G-Cter in SUMO2). Ser145 carries the phosphoserine modification. Glycyl lysine isopeptide (Lys-Gly) (interchain with G-Cter in SUMO2) cross-links involve residues Lys179 and Lys192. Polar residues predominate over residues 197 to 207; sequence SKTNRQTSTKG. Residues 197-239 form a disordered region; it reads SKTNRQTSTKGQVLRKKKKKVSGTLDTPEKTVDSQGPTPVCTP. Ser218 carries the post-translational modification Phosphoserine. Thr223 is modified (phosphothreonine). The tract at residues 226–269 is interaction with MKI67; that stretch reads KTVDSQGPTPVCTPTFLERRKSQVAELNDDDKDDEIVFKQPISC. A Phosphoserine modification is found at Ser230. Thr234 and Thr238 each carry phosphothreonine. An omega-N-methylated arginine; by PRMT1 and PRMT8 mark is found at Arg244 and Arg245. Position 247 is a phosphoserine (Ser247). Lys271 participates in a covalent cross-link: Glycyl lysine isopeptide (Lys-Gly) (interchain with G-Cter in SUMO1); alternate. A Glycyl lysine isopeptide (Lys-Gly) (interchain with G-Cter in SUMO2); alternate cross-link involves residue Lys271. The tract at residues 271–293 is disordered; that stretch reads KEEIQETQTPTHSRKKRRRSSNQ. Thr279 carries the phosphothreonine modification. Basic residues predominate over residues 282 to 293; sequence HSRKKRRRSSNQ. Arg284 carries the post-translational modification Omega-N-methylarginine; by PRMT1 and PRMT8.

As to quaternary structure, binds to the FHA domain of MKI67; this interaction is enhanced in mitosis. Sequentially phosphorylated on Thr-238, Thr-234 and Ser-230. Thr-234 is phosphorylated only when Thr-238 is phosphorylated. Likewise, phosphorylation at Ser-230 requires that Thr-234 and Thr-238 are phosphorylated. Phosphorylation enhances MKI67 binding.

The protein resides in the nucleus. The protein localises to the nucleolus. It localises to the chromosome. The chain is MKI67 FHA domain-interacting nucleolar phosphoprotein (NIFK) from Homo sapiens (Human).